The following is a 123-amino-acid chain: Small ribosomal subunit protein uS12c (123 aa).

Belongs to the universal ribosomal protein uS12 family. Part of the 30S ribosomal subunit.

The protein resides in the plastid. It localises to the chloroplast. Functionally, with S4 and S5 plays an important role in translational accuracy. Located at the interface of the 30S and 50S subunits. The chain is Small ribosomal subunit protein uS12c (rps12) from Chlorokybus atmophyticus (Soil alga).